The sequence spans 160 residues: Protein cornichon homolog 2 (160 aa).

Over 1 to 10 the chain is Cytoplasmic; that stretch reads MAFTFAAFCY. A helical membrane pass occupies residues 11–31; it reads MLTLVLCASLIFFVIWHIIAF. Over 32–72 the chain is Lumenal; that stretch reads DELRTDFKNPIDQGNPARARERLKNIERICCLLRKLVVPEY. A helical membrane pass occupies residues 73 to 93; it reads CIHGLFCLMFLCAAEWVTLGL. At 94-138 the chain is on the cytoplasmic side; sequence NLPLLLYHLWRYFHRPSDGSEGLFDAVSIMDADILGYCQKEAWCK. The helical transmembrane segment at 139–159 threads the bilayer; the sequence is LAFYLLSFFYYLYSMVYTLVS. Phenylalanine 160 is a topological domain (lumenal).

Belongs to the cornichon family. As to quaternary structure, interacts with HBEGF. In terms of tissue distribution, expressed in the odd-numbered neuromeres (r3 and r5) of the developing hindbrain.

Its subcellular location is the membrane. Its function is as follows. Regulates the trafficking and gating properties of AMPA-selective glutamate receptors (AMPARs). Plays an important role in the proper development of cranial nerves by facilitating the secretion of HBEGF. In Gallus gallus (Chicken), this protein is Protein cornichon homolog 2 (CNIH2).